Consider the following 178-residue polypeptide: Transcription termination/antitermination protein NusG (178 aa).

The 31-residue stretch at 126–156 (VGQQVRVNEGPFADFNGVVEEVNYERNKLRV) folds into the KOW domain.

Belongs to the NusG family.

In terms of biological role, participates in transcription elongation, termination and antitermination. In Neisseria meningitidis serogroup B (strain ATCC BAA-335 / MC58), this protein is Transcription termination/antitermination protein NusG.